The primary structure comprises 346 residues: D-alanine--D-alanine ligase A (346 aa).

Residues 138–332 form the ATP-grasp domain; it reads KRLFLAAGVE…FAELCERICR (195 aa). Residue 164–217 coordinates ATP; the sequence is QLGFPLVVKPNSQGSTVGLSIVHSQAELQPAIELAGRYGDEVMLERFVAGREVT. D286, E299, and N301 together coordinate Mg(2+).

It belongs to the D-alanine--D-alanine ligase family. It depends on Mg(2+) as a cofactor. The cofactor is Mn(2+).

The protein localises to the cytoplasm. The enzyme catalyses 2 D-alanine + ATP = D-alanyl-D-alanine + ADP + phosphate + H(+). It functions in the pathway cell wall biogenesis; peptidoglycan biosynthesis. Functionally, cell wall formation. This Pseudomonas aeruginosa (strain ATCC 15692 / DSM 22644 / CIP 104116 / JCM 14847 / LMG 12228 / 1C / PRS 101 / PAO1) protein is D-alanine--D-alanine ligase A.